Reading from the N-terminus, the 437-residue chain is ATP-dependent protease ATPase subunit HslU (437 aa).

Residues Val-18, 60–65 (GCGKTE), Asp-250, Glu-315, and Arg-387 each bind ATP.

It belongs to the ClpX chaperone family. HslU subfamily. A double ring-shaped homohexamer of HslV is capped on each side by a ring-shaped HslU homohexamer. The assembly of the HslU/HslV complex is dependent on binding of ATP.

It is found in the cytoplasm. Functionally, ATPase subunit of a proteasome-like degradation complex; this subunit has chaperone activity. The binding of ATP and its subsequent hydrolysis by HslU are essential for unfolding of protein substrates subsequently hydrolyzed by HslV. HslU recognizes the N-terminal part of its protein substrates and unfolds these before they are guided to HslV for hydrolysis. The chain is ATP-dependent protease ATPase subunit HslU from Methylorubrum populi (strain ATCC BAA-705 / NCIMB 13946 / BJ001) (Methylobacterium populi).